Here is a 128-residue protein sequence, read N- to C-terminus: MSDQGFPRRQRLLTAGDYQHVFAHASFKVHGKGLLVLARPNALGYPRVGFVFSKKNVRRAVDRNRLKRLVRESFRLQSHRLPAVDIIVLARRGVDALDNATLHRQLHGMWRRLEKDVRKQSVASTPSP.

This sequence belongs to the RnpA family. Consists of a catalytic RNA component (M1 or rnpB) and a protein subunit.

It carries out the reaction Endonucleolytic cleavage of RNA, removing 5'-extranucleotides from tRNA precursor.. RNaseP catalyzes the removal of the 5'-leader sequence from pre-tRNA to produce the mature 5'-terminus. It can also cleave other RNA substrates such as 4.5S RNA. The protein component plays an auxiliary but essential role in vivo by binding to the 5'-leader sequence and broadening the substrate specificity of the ribozyme. The sequence is that of Ribonuclease P protein component from Chromohalobacter salexigens (strain ATCC BAA-138 / DSM 3043 / CIP 106854 / NCIMB 13768 / 1H11).